The sequence spans 84 residues: Large ribosomal subunit protein bL31 (84 aa).

Disordered stretches follow at residues 1–41 and 63–84; these read MQHD…DSTN and RRYGLTDDDEGDDEETEDAADE. The span at 21–30 shows a compositional bias: polar residues; the sequence is EITTRSTMET. The span at 68-84 shows a compositional bias: acidic residues; the sequence is TDDDEGDDEETEDAADE.

This sequence belongs to the bacterial ribosomal protein bL31 family. Type A subfamily. As to quaternary structure, part of the 50S ribosomal subunit.

In terms of biological role, binds the 23S rRNA. This is Large ribosomal subunit protein bL31 from Salinibacter ruber (strain DSM 13855 / M31).